Reading from the N-terminus, the 548-residue chain is Asparagine--tRNA ligase, cytoplasmic (548 aa).

Positions 1–25 (MVLAELYVSDREGSDATGDGTKEKP) are disordered. The segment covering 8-25 (VSDREGSDATGDGTKEKP) has biased composition (basic and acidic residues). Serine 61 is subject to Phosphoserine. The segment at 69-91 (MWHREQMKSESREKKEAEDSLRR) is disordered. Over residues 71-91 (HREQMKSESREKKEAEDSLRR) the composition is skewed to basic and acidic residues. Lysine 244 carries the post-translational modification N6-acetyllysine. Serine 482 is subject to Phosphoserine. The residue at position 490 (lysine 490) is an N6-acetyllysine.

This sequence belongs to the class-II aminoacyl-tRNA synthetase family. As to quaternary structure, homodimer.

It is found in the cytoplasm. The enzyme catalyses tRNA(Asn) + L-asparagine + ATP = L-asparaginyl-tRNA(Asn) + AMP + diphosphate + H(+). Catalyzes the attachment of asparagine to tRNA(Asn) in a two-step reaction: asparagine is first activated by ATP to form Asn-AMP and then transferred to the acceptor end of tRNA(Asn). In addition to its essential role in protein synthesis, acts as a signaling molecule that induced migration of CCR3-expressing cells. Has an essential role in the development of the cerebral cortex, being required for proper proliferation of radial glial cells. In Homo sapiens (Human), this protein is Asparagine--tRNA ligase, cytoplasmic.